The sequence spans 550 residues: Arginine--tRNA ligase (550 aa).

The 'HIGH' region signature appears at 123–133 (ANPTGYLHIAH).

This sequence belongs to the class-I aminoacyl-tRNA synthetase family. As to quaternary structure, monomer.

It is found in the cytoplasm. The catalysed reaction is tRNA(Arg) + L-arginine + ATP = L-arginyl-tRNA(Arg) + AMP + diphosphate. In Ureaplasma parvum serovar 3 (strain ATCC 27815 / 27 / NCTC 11736), this protein is Arginine--tRNA ligase.